We begin with the raw amino-acid sequence, 127 residues long: NADPH-dependent 7-cyano-7-deazaguanine reductase (127 aa).

The active-site Thioimide intermediate is Cys-40. The active-site Proton donor is Asp-47. Substrate contacts are provided by residues 62–64 (VEL) and 81–82 (HE).

This sequence belongs to the GTP cyclohydrolase I family. QueF type 1 subfamily.

It is found in the cytoplasm. It carries out the reaction 7-aminomethyl-7-carbaguanine + 2 NADP(+) = 7-cyano-7-deazaguanine + 2 NADPH + 3 H(+). The protein operates within tRNA modification; tRNA-queuosine biosynthesis. In terms of biological role, catalyzes the NADPH-dependent reduction of 7-cyano-7-deazaguanine (preQ0) to 7-aminomethyl-7-deazaguanine (preQ1). This chain is NADPH-dependent 7-cyano-7-deazaguanine reductase, found in Campylobacter jejuni subsp. jejuni serotype O:6 (strain 81116 / NCTC 11828).